We begin with the raw amino-acid sequence, 211 residues long: Small ribosomal subunit protein uS3c (211 aa).

A KH type-2 domain is found at 39 to 109 (IREFAESRLP…NVALYVTKTQ (71 aa)).

The protein belongs to the universal ribosomal protein uS3 family. As to quaternary structure, part of the 30S ribosomal subunit.

It is found in the plastid. Its subcellular location is the chloroplast. This chain is Small ribosomal subunit protein uS3c (rps3), found in Ostreococcus tauri.